The primary structure comprises 96 residues: MLRLDLQFFSTKKGQGSSKNGRDSESKRLGSKRADGQFVSGGSILYRQRGTKIYPGENVGRGGDDTLFSKIDGVVKFERYGRNRKKVSVYPVAKEA.

A propeptide spanning residues 1–9 (MLRLDLQFF) is cleaved from the precursor. The tract at residues 1–36 (MLRLDLQFFSTKKGQGSSKNGRDSESKRLGSKRADG) is disordered. Residues 8–19 (FFSTKKGQGSSK) are compositionally biased toward polar residues. Positions 20 to 35 (NGRDSESKRLGSKRAD) are enriched in basic and acidic residues.

This sequence belongs to the bacterial ribosomal protein bL27 family. The N-terminus is cleaved by ribosomal processing cysteine protease Prp.

The protein is Large ribosomal subunit protein bL27 of Oceanobacillus iheyensis (strain DSM 14371 / CIP 107618 / JCM 11309 / KCTC 3954 / HTE831).